Reading from the N-terminus, the 300-residue chain is Vetispiradiene synthase 2 (300 aa).

Positions 54, 58, 197, 201, and 205 each coordinate Mg(2+). The DDXXD motif signature appears at 54-58 (DDTFD).

This sequence belongs to the terpene synthase family. Tpsa subfamily. Mg(2+) is required as a cofactor.

It is found in the cytoplasm. The catalysed reaction is (2E,6E)-farnesyl diphosphate = (-)-vetispiradiene + diphosphate. It functions in the pathway secondary metabolite biosynthesis; terpenoid biosynthesis. In terms of biological role, sesquiterpene synthase that catalyzes the formation of vetispiradiene from trans,trans-farnesyl diphosphate. The initial internal cyclization produces the monocyclic intermediate germacrene A. This Hyoscyamus muticus (Egyptian henbane) protein is Vetispiradiene synthase 2.